A 279-amino-acid polypeptide reads, in one-letter code: Release factor glutamine methyltransferase (279 aa).

The S-adenosyl-L-methionine site is built by E141 and N187. 187–190 (NPPY) serves as a coordination point for substrate.

The protein belongs to the protein N5-glutamine methyltransferase family. PrmC subfamily.

The enzyme catalyses L-glutaminyl-[peptide chain release factor] + S-adenosyl-L-methionine = N(5)-methyl-L-glutaminyl-[peptide chain release factor] + S-adenosyl-L-homocysteine + H(+). Its function is as follows. Methylates the class 1 translation termination release factors RF1/PrfA and RF2/PrfB on the glutamine residue of the universally conserved GGQ motif. In Corynebacterium glutamicum (strain ATCC 13032 / DSM 20300 / JCM 1318 / BCRC 11384 / CCUG 27702 / LMG 3730 / NBRC 12168 / NCIMB 10025 / NRRL B-2784 / 534), this protein is Release factor glutamine methyltransferase.